Reading from the N-terminus, the 105-residue chain is Small ribosomal subunit protein uS10 (105 aa).

The protein belongs to the universal ribosomal protein uS10 family. In terms of assembly, part of the 30S ribosomal subunit.

Functionally, involved in the binding of tRNA to the ribosomes. This Desulfotalea psychrophila (strain LSv54 / DSM 12343) protein is Small ribosomal subunit protein uS10.